The following is a 505-amino-acid chain: Aspartyl/glutamyl-tRNA(Asn/Gln) amidotransferase subunit B (505 aa).

The segment at 220 to 241 is disordered; it reads NVSLRPRPAPGDPDAPFGTRSE.

The protein belongs to the GatB/GatE family. GatB subfamily. Heterotrimer of A, B and C subunits.

The catalysed reaction is L-glutamyl-tRNA(Gln) + L-glutamine + ATP + H2O = L-glutaminyl-tRNA(Gln) + L-glutamate + ADP + phosphate + H(+). It carries out the reaction L-aspartyl-tRNA(Asn) + L-glutamine + ATP + H2O = L-asparaginyl-tRNA(Asn) + L-glutamate + ADP + phosphate + 2 H(+). Functionally, allows the formation of correctly charged Asn-tRNA(Asn) or Gln-tRNA(Gln) through the transamidation of misacylated Asp-tRNA(Asn) or Glu-tRNA(Gln) in organisms which lack either or both of asparaginyl-tRNA or glutaminyl-tRNA synthetases. The reaction takes place in the presence of glutamine and ATP through an activated phospho-Asp-tRNA(Asn) or phospho-Glu-tRNA(Gln). This Frankia casuarinae (strain DSM 45818 / CECT 9043 / HFP020203 / CcI3) protein is Aspartyl/glutamyl-tRNA(Asn/Gln) amidotransferase subunit B.